Consider the following 541-residue polypeptide: Neutral amino acid transporter B(0) (541 aa).

Met1 is subject to N-acetylmethionine. Basic and acidic residues predominate over residues 1 to 10 (MVADPPKGDP). The interval 1–32 (MVADPPKGDPKGLAAVEPTANGAPAQDPLEDS) is disordered. At 1–52 (MVADPPKGDPKGLAAVEPTANGAPAQDPLEDSGAAVGRCCSSRDQVRRCLRA) the chain is on the cytoplasmic side. Residues 53–82 (NLLVLLTVVAVVAGVALGLAVSGAGGALAL) traverse the membrane as a helical segment. Topologically, residues 83-95 (GPARLIAFAFPGE) are extracellular. A helical membrane pass occupies residues 96–117 (LLLRLLKMIILPLVVCSLVGGA). The Cytoplasmic segment spans residues 118–131 (ASLDPSALGRLGAW). Residues 132-154 (ALLFFLVTTLLASALGVGLALAL) form a helical membrane-spanning segment. Residues 155 to 225 (QPGAAFAAMN…GTLVKVPVAH (71 aa)) are Extracellular-facing. N-linked (GlcNAc...) asparagine glycosylation is found at Asn164 and Asn215. A helical transmembrane segment spans residues 226–249 (EEEGMNILGLVVFAIVFGVALRKL). The Cytoplasmic segment spans residues 250-258 (GPEGEPLIR). Residues 259 to 286 (FFNSFNDATMVLVSWIMWYAPVGILFLV) form a helical membrane-spanning segment. Residues 287–307 (ASKIVEMDDVGVLFASLGKYI) are Extracellular-facing. Residues 308–329 (LCCLLGHAIHGLLVLPLIYFLF) traverse the membrane as a helical segment. Over 330 to 334 (TRKNP) the chain is Cytoplasmic. An intramembrane region (discontinuously helical) is located at residues 335 to 365 (YRFLWGILTPLAMAFGTSSSSATLPLMMKCV). Residues 366 to 374 (EERNGVAKH) lie on the Cytoplasmic side of the membrane. A helical transmembrane segment spans residues 375–401 (ISRFVLPIGATVNMDGAALFQCVAAVF). Na(+)-binding residues include Gly383, Thr385, and Asn387. The Extracellular portion of the chain corresponds to 402-414 (IAQLNRQSLDFVK). An intramembrane region (discontinuously helical) is located at residues 415–448 (IITILVTATASSVGAAGIPAGGVLTLAIILEAVS). Residues 449–461 (LPVSEISLILAVD) are Extracellular-facing. The chain crosses the membrane as a helical span at residues 462–483 (WLVDRSCTIINVEGDAFGAGLL). Na(+) contacts are provided by Asn472 and Asp476. Residues 484–541 (QHYVDRTEQRGSEPELTQVKSEVPLGSLPAPNEEGNPLLRHSPGAAGDAGACEKESVM) are Cytoplasmic-facing. Residues 493 to 541 (RGSEPELTQVKSEVPLGSLPAPNEEGNPLLRHSPGAAGDAGACEKESVM) are disordered. 3 positions are modified to phosphoserine: Ser495, Ser504, and Ser539.

It belongs to the dicarboxylate/amino acid:cation symporter (DAACS) (TC 2.A.23) family. SLC1A5 subfamily. Homotrimer.

Its subcellular location is the cell membrane. It is found in the melanosome. The enzyme catalyses L-glutamine(out) + L-serine(in) + Na(+)(out) = L-glutamine(in) + L-serine(out) + Na(+)(in). It carries out the reaction L-glutamine(in) + L-serine(out) + Na(+)(out) = L-glutamine(out) + L-serine(in) + Na(+)(in). The catalysed reaction is L-threonine(in) + L-glutamine(out) + Na(+)(out) = L-threonine(out) + L-glutamine(in) + Na(+)(in). It catalyses the reaction L-threonine(out) + L-glutamine(in) + Na(+)(out) = L-threonine(in) + L-glutamine(out) + Na(+)(in). The enzyme catalyses L-asparagine(in) + L-glutamine(out) + Na(+)(out) = L-asparagine(out) + L-glutamine(in) + Na(+)(in). It carries out the reaction L-asparagine(out) + L-glutamine(in) + Na(+)(out) = L-asparagine(in) + L-glutamine(out) + Na(+)(in). The catalysed reaction is L-glutamine(in) + L-alanine(out) + Na(+)(out) = L-glutamine(out) + L-alanine(in) + Na(+)(in). It catalyses the reaction L-valine(out) + L-glutamine(in) + Na(+)(out) = L-valine(in) + L-glutamine(out) + Na(+)(in). The enzyme catalyses L-glutamine(in) + L-methionine(out) + Na(+)(out) = L-glutamine(out) + L-methionine(in) + Na(+)(in). It carries out the reaction L-glutamine(in) + L-glutamate(out) + Na(+)(out) + H(+)(out) = L-glutamine(out) + L-glutamate(in) + Na(+)(in) + H(+)(in). The catalysed reaction is D-serine(in) + L-glutamine(out) + Na(+)(out) = D-serine(out) + L-glutamine(in) + Na(+)(in). It catalyses the reaction D-serine(in) + L-alanine(out) + Na(+)(out) = D-serine(out) + L-alanine(in) + Na(+)(in). The enzyme catalyses nitrate(in) = nitrate(out). It carries out the reaction iodide(out) = iodide(in). The catalysed reaction is thiocyanate(in) = thiocyanate(out). Its function is as follows. Sodium-coupled antiporter of neutral amino acids. In a tri-substrate transport cycle, exchanges neutral amino acids between the extracellular and intracellular compartments, coupled to the inward cotransport of at least one sodium ion. The preferred substrate is the essential amino acid L-glutamine, a precursor for biosynthesis of proteins, nucleotides and amine sugars as well as an alternative fuel for mitochondrial oxidative phosphorylation. Exchanges L-glutamine with other neutral amino acids such as L-serine, L-threonine and L-asparagine in a bidirectional way. Provides L-glutamine to proliferating stem and activated cells driving the metabolic switch toward cell differentiation. The transport cycle is usually pH-independent, with the exception of L-glutamate. Transports extracellular L-glutamate coupled to the cotransport of one proton and one sodium ion in exchange for intracellular L-glutamine counter-ion. May provide for L-glutamate uptake in glial cells regulating glutamine/glutamate cycle in the nervous system. Can transport D-amino acids. Mediates D-serine release from the retinal glia potentially affecting NMDA receptor function in retinal neurons. Displays sodium- and amino acid-dependent but uncoupled channel-like anion conductance with a preference SCN(-) &gt;&gt; NO3(-) &gt; I(-) &gt; Cl(-). Through binding of the fusogenic protein syncytin-1/ERVW-1 may mediate trophoblasts syncytialization, the spontaneous fusion of their plasma membranes, an essential process in placental development. This Oryctolagus cuniculus (Rabbit) protein is Neutral amino acid transporter B(0) (SLC1A5).